Reading from the N-terminus, the 439-residue chain is Dolichyl-diphosphooligosaccharide--protein glycosyltransferase 48 kDa subunit (439 aa).

The N-terminal stretch at 1 to 26 (MATRAARVWSGWWLLLLPLLGLAGAS) is a signal peptide. Residues 27–409 (GPRTLVLLDN…QYERFIPSAY (383 aa)) are Lumenal-facing. Residues 410–430 (PYYASAFSMMLGLFIFSVVFL) traverse the membrane as a helical segment. Over 431 to 439 (HMKEKEKSD) the chain is Cytoplasmic.

It belongs to the DDOST 48 kDa subunit family. As to quaternary structure, component of the oligosaccharyltransferase (OST) complex. OST exists in two different complex forms which contain common core subunits RPN1, RPN2, OST48, OST4, DAD1 and TMEM258, either STT3A or STT3B as catalytic subunits, and form-specific accessory subunits. STT3A complex assembly occurs through the formation of 3 subcomplexes. Subcomplex 1 contains RPN1 and TMEM258, subcomplex 2 contains the STT3A-specific subunits STT3A, DC2/OSTC, and KCP2 as well as the core subunit OST4, and subcomplex 3 contains RPN2, DAD1, and OST48. The STT3A complex can form stable complexes with the Sec61 complex or with both the Sec61 and TRAP complexes. Interacts with SMIM22.

The protein resides in the endoplasmic reticulum membrane. The protein operates within protein modification; protein glycosylation. Subunit of the oligosaccharyl transferase (OST) complex that catalyzes the initial transfer of a defined glycan (Glc(3)Man(9)GlcNAc(2) in eukaryotes) from the lipid carrier dolichol-pyrophosphate to an asparagine residue within an Asn-X-Ser/Thr consensus motif in nascent polypeptide chains, the first step in protein N-glycosylation. N-glycosylation occurs cotranslationally and the complex associates with the Sec61 complex at the channel-forming translocon complex that mediates protein translocation across the endoplasmic reticulum (ER). All subunits are required for a maximal enzyme activity. Required for the assembly of both SST3A- and SS3B-containing OST complexes. This is Dolichyl-diphosphooligosaccharide--protein glycosyltransferase 48 kDa subunit from Bos taurus (Bovine).